Reading from the N-terminus, the 247-residue chain is MVRNDLVMEIPWDIEATLLSRPNRFLGIVEMDESTSSGPFQEKVHIHDPGRLEDLLYPGNRLLLRKATNPKRKTGWDVIAAKADDGWILINSIFHRRIAEWAIANKVCSCFENVLEVIPEQKFGDSRLDFLLKKSDTELWVEVKGCTLIYGNTATFPDAPTTRGKRHVGELKKALESGSEALILIIILRKDALCFKANASIDPDFAEVFKDAVNAGVQVCPLVFGYEGRELFYKGMVPLCTEEYNSI.

It belongs to the SfsA family.

This Methanococcoides burtonii (strain DSM 6242 / NBRC 107633 / OCM 468 / ACE-M) protein is Sugar fermentation stimulation protein homolog.